The primary structure comprises 129 residues: MNAPQWLGAEGEKIAARHLAAKGYRIVARNYRFHRNEIDIIAFDGEALCFIEVKTRASLGKGHPAESVTRSKQKEIARAAAGYLASLDDPWITCRFDVIAVLALSIDERSIRKYEIEHIKAAFMVGDKG.

Belongs to the UPF0102 family.

This is UPF0102 protein CT2262 from Chlorobaculum tepidum (strain ATCC 49652 / DSM 12025 / NBRC 103806 / TLS) (Chlorobium tepidum).